A 605-amino-acid polypeptide reads, in one-letter code: Insulin-like growth factor-binding protein complex acid labile subunit (605 aa).

The signal sequence occupies residues 1-27; it reads MALRKGGLALALLLLSWVALGPRSLEG. The region spanning 32–74 is the LRRNT domain; the sequence is TPGEAEGPACPATCACSYDDEVNELSVFCSSRNLTRLPDGIPG. 2 cysteine pairs are disulfide-bonded: C41-C47 and C45-C60. N-linked (GlcNAc...) asparagine glycans are attached at residues N64, N85, and N96. LRR repeat units follow at residues 75 to 96, 99 to 120, 123 to 144, 147 to 168, 171 to 192, 195 to 216, 219 to 240, 243 to 264, 267 to 288, 291 to 312, 315 to 336, 339 to 360, 363 to 384, 387 to 408, 411 to 432, 435 to 456, 459 to 480, 483 to 504, and 507 to 528; these read GTQA…AFRN, SLAF…ALLG, NLCH…TFAY, ALAL…LFEG, NLWD…AFRG, GLRE…LFSG, ELRE…VFAQ, RLQK…AFLG, ALRW…TFPG, GLRV…TFED, FLEE…SFEG, QLEV…AFLG, NVAV…VFRG, KLHS…TFAG, GLRR…SLWG, ELLE…LFQG, KLEY…ALGP, RAFW…LLAS, and RLRY…PPGL. N368 carries N-linked (GlcNAc...) asparagine glycosylation. N515 carries N-linked (GlcNAc...) asparagine glycosylation. An LRRCT domain is found at 536–605; sequence NPWDCSCPLK…DLGEAHFAPC (70 aa). 3 disulfide bridges follow: C540/C583, C542/C605, and C566/C571. N-linked (GlcNAc...) asparagine glycosylation is present at N580.

As to quaternary structure, forms a ternary complex with IGF1 and IGFBP3.

The protein resides in the secreted. It localises to the extracellular space. Functionally, involved in protein-protein interactions that result in protein complexes, receptor-ligand binding or cell adhesion. In Papio hamadryas (Hamadryas baboon), this protein is Insulin-like growth factor-binding protein complex acid labile subunit (IGFALS).